The following is a 195-amino-acid chain: UPF0215 protein TSIB_1161 (195 aa).

It belongs to the UPF0215 family.

This Thermococcus sibiricus (strain DSM 12597 / MM 739) protein is UPF0215 protein TSIB_1161.